The chain runs to 689 residues: Armadillo-like helical domain-containing protein 3 (689 aa).

The helical transmembrane segment at 520 to 538 (IFQLALQVVNLFNMFITYG) threads the bilayer.

This sequence belongs to the ARMH3 family.

It localises to the golgi apparatus membrane. Its subcellular location is the cytoplasm. Functionally, may be involved in Golgi maintenance and protein secretion. The protein is Armadillo-like helical domain-containing protein 3 of Danio rerio (Zebrafish).